The following is an 808-amino-acid chain: Protein tortoise (808 aa).

Positions 43-78 form a coiled coil; it reads KDRKELYSLNNDSIKKKLNQLKDETNQLLKERGEEL. A disordered region spans residues 152 to 171; that stretch reads LTSGGANKKKSPFLEDNNNK. A coiled-coil region spans residues 694–733; that stretch reads EDLDFQIEELELMIKNKKILEREIKAHNEKISKIIKDSRD.

It localises to the mitochondrion. Functionally, required for efficient chemotaxis. The protein is Protein tortoise (torA) of Dictyostelium discoideum (Social amoeba).